The chain runs to 475 residues: NADH-quinone oxidoreductase subunit N (475 aa).

14 helical membrane-spanning segments follow: residues 7–27 (ISIAAPEALLIGVALIGVLLG), 40–60 (LLGALALAGAAFLAASQSAVD), 74–94 (FIAIAKAVSYGVGAIALLVAG), 105–125 (FEYTLLVMFGSAGMGVMLSAN), 127–147 (LMTLYMGIETLSLSSYVLAAF), 161–181 (YFVLGALASGLLLFGCSLVYG), 191–211 (IAAADQSIGLTFGLVLILMAL), 242–262 (APKLATVAVLANIMFTVFGVY), 266–286 (WMLIIAIVSAISMLVGAFGGL), 295–315 (LAYSSIANVGYALMGVAAGEV), 321–341 (VLTYMTIYVITTLGMFGIVLA), 365–385 (LAVAMTVLVFSVAGIPPMAGF), 399–419 (ELYWLVAVGVIGSVVSLGYYL), and 448–468 (GATILAFPVLVIWIGWMTGII).

It belongs to the complex I subunit 2 family. NDH-1 is composed of 14 different subunits. Subunits NuoA, H, J, K, L, M, N constitute the membrane sector of the complex.

It localises to the cell inner membrane. The catalysed reaction is a quinone + NADH + 5 H(+)(in) = a quinol + NAD(+) + 4 H(+)(out). NDH-1 shuttles electrons from NADH, via FMN and iron-sulfur (Fe-S) centers, to quinones in the respiratory chain. The immediate electron acceptor for the enzyme in this species is believed to be ubiquinone. Couples the redox reaction to proton translocation (for every two electrons transferred, four hydrogen ions are translocated across the cytoplasmic membrane), and thus conserves the redox energy in a proton gradient. In Hirschia baltica (strain ATCC 49814 / DSM 5838 / IFAM 1418), this protein is NADH-quinone oxidoreductase subunit N.